The chain runs to 448 residues: Argininosuccinate synthase (448 aa).

Residues 17–25 (AFSGGLDTS) and alanine 43 contribute to the ATP site. Tyrosine 99 contributes to the L-citrulline binding site. ATP-binding residues include glycine 129 and threonine 131. Positions 131, 135, and 136 each coordinate L-aspartate. Asparagine 135 is an L-citrulline binding site. Position 136 (aspartate 136) interacts with ATP. L-citrulline contacts are provided by arginine 139 and serine 192. ATP is bound at residue aspartate 194. L-citrulline contacts are provided by threonine 201, glutamate 203, and glutamate 280.

The protein belongs to the argininosuccinate synthase family. Type 2 subfamily. As to quaternary structure, homotetramer.

It localises to the cytoplasm. The catalysed reaction is L-citrulline + L-aspartate + ATP = 2-(N(omega)-L-arginino)succinate + AMP + diphosphate + H(+). Its pathway is amino-acid biosynthesis; L-arginine biosynthesis; L-arginine from L-ornithine and carbamoyl phosphate: step 2/3. This is Argininosuccinate synthase from Acidovorax ebreus (strain TPSY) (Diaphorobacter sp. (strain TPSY)).